The chain runs to 135 residues: Large ribosomal subunit protein uL16c (135 aa).

This sequence belongs to the universal ribosomal protein uL16 family. In terms of assembly, part of the 50S ribosomal subunit.

It localises to the plastid. It is found in the chloroplast. In Populus alba (White poplar), this protein is Large ribosomal subunit protein uL16c.